A 323-amino-acid polypeptide reads, in one-letter code: Oligodendrocyte transcription factor 2 (323 aa).

The segment covering 1-13 has biased composition (polar residues); that stretch reads MDSDASLVSSRPS. Residues 1-107 are disordered; sequence MDSDASLVSS…KKQMTEPELQ (107 aa). The segment covering 77 to 93 has biased composition (low complexity); the sequence is SSSSSTSSSTSSAATSS. The bHLH domain occupies 108 to 162; it reads QLRLKINSRERKRMHDLNIAMDGLREVMPYAHGPSVRKLSKIATLLLARNYILML.

As to quaternary structure, interacts with NKX2-2. Interacts with ZNF488. In terms of tissue distribution, expressed specifically in the brain.

It localises to the nucleus. The protein resides in the cytoplasm. In terms of biological role, required for oligodendrocyte and motor neuron specification in the spinal cord, as well as for the development of somatic motor neurons in the hindbrain. Functions together with ZNF488 to promote oligodendrocyte differentiation. Cooperates with OLIG1 to establish the pMN domain of the embryonic neural tube. Antagonist of V2 interneuron and of NKX2-2-induced V3 interneuron development. This is Oligodendrocyte transcription factor 2 (Olig2) from Mus musculus (Mouse).